The primary structure comprises 503 residues: Lysine--tRNA ligase (503 aa).

2 residues coordinate Mg(2+): Glu414 and Glu421.

It belongs to the class-II aminoacyl-tRNA synthetase family. Homodimer. Mg(2+) is required as a cofactor.

The protein localises to the cytoplasm. The catalysed reaction is tRNA(Lys) + L-lysine + ATP = L-lysyl-tRNA(Lys) + AMP + diphosphate. The chain is Lysine--tRNA ligase from Neisseria meningitidis serogroup A / serotype 4A (strain DSM 15465 / Z2491).